A 376-amino-acid chain; its full sequence is Protein insensitive (376 aa).

A coiled-coil region spans residues 50-79 (QVEVENRALRDKVRYLEAKLQQHKDLLSQI). Residues 258 to 356 (GPNNTCVPAS…TKCADENKMM (99 aa)) enclose the BEN domain.

As to quaternary structure, homodimer. Interacts (via BEN domain) with Su(H). Interacts with Cp190.

It localises to the nucleus. In terms of biological role, can act as both a transcriptional repressor and corepressor. Represses the expression of genes involved in neural development and preferentially binds palindromic sequence 5'-CCAATTGG-3' to mediate transcriptional repression. Acts as a corepressor for suppressor of hairless (Su(H)) and inhibits Notch signaling during peripheral nervous system development. In Drosophila melanogaster (Fruit fly), this protein is Protein insensitive (insv).